The sequence spans 498 residues: ATP synthase subunit beta, chloroplastic (498 aa).

Glycine 172–threonine 179 provides a ligand contact to ATP.

The protein belongs to the ATPase alpha/beta chains family. F-type ATPases have 2 components, CF(1) - the catalytic core - and CF(0) - the membrane proton channel. CF(1) has five subunits: alpha(3), beta(3), gamma(1), delta(1), epsilon(1). CF(0) has four main subunits: a(1), b(1), b'(1) and c(9-12).

It is found in the plastid. The protein resides in the chloroplast thylakoid membrane. It carries out the reaction ATP + H2O + 4 H(+)(in) = ADP + phosphate + 5 H(+)(out). Produces ATP from ADP in the presence of a proton gradient across the membrane. The catalytic sites are hosted primarily by the beta subunits. The polypeptide is ATP synthase subunit beta, chloroplastic (Aristolochia macrophylla (Dutchman's pipe vine)).